Consider the following 172-residue polypeptide: Disulfide bond formation protein B (172 aa).

At 1 to 16 (MNLFASLNQFSKNRIS) the chain is on the cytoplasmic side. The helical transmembrane segment at 17 to 33 (WLLLLLFVVFFEGAALF) threads the bilayer. At 34–51 (FQHVMMLSPCVMCIYERV) the chain is on the periplasmic side. A disulfide bridge connects residues Cys43 and Cys46. The chain crosses the membrane as a helical span at residues 52–67 (AMLGVGGAALFGLIAP). At 68 to 74 (NNPLVRW) the chain is on the cytoplasmic side. The chain crosses the membrane as a helical span at residues 75–92 (LGLAAWGASAYKGLALSL). The Periplasmic segment spans residues 93-147 (QHVDYQFNPSPFATCDLFVTFPDWAPLNQWAPWMFEAYGDCSKIVWQFMTLSMPQ). A disulfide bridge connects residues Cys107 and Cys133. The helical transmembrane segment at 148–166 (WLVIIFAGNLVALAFIVIA) threads the bilayer. The Cytoplasmic portion of the chain corresponds to 167-172 (QFFKSK).

The protein belongs to the DsbB family.

The protein localises to the cell inner membrane. Required for disulfide bond formation in some periplasmic proteins. Acts by oxidizing the DsbA protein. The protein is Disulfide bond formation protein B of Vibrio vulnificus (strain CMCP6).